We begin with the raw amino-acid sequence, 61 residues long: MGMRMMFTVFLLVVLATTVVSFTSDRASDDGNAAASDLIALTIKGCCSLPPCALSNPDYCG.

A signal peptide spans M1–S21. Residues F22–K44 constitute a propeptide that is removed on maturation. Cystine bridges form between C46–C52 and C47–C60. Residues S48–P50 form a ser-Xaa-Pro motif, crucial for potent interaction with nAChR region. Y59 is modified (sulfotyrosine). C60 is modified (cysteine amide).

The protein belongs to the conotoxin A superfamily. Expressed by the venom duct.

The protein resides in the secreted. Its function is as follows. Alpha-conotoxins act on postsynaptic membranes, they bind to the nicotinic acetylcholine receptors (nAChR) and thus inhibit them. This toxin blocks mammalian nAChRs (alpha-7/CHRNA7 &gt; alpha-3-beta-2/CHRNA3-CHRNB2). The sequence is that of Alpha-conotoxin PnIB from Conus pennaceus (Feathered cone).